The sequence spans 233 residues: 2,3-bisphosphoglycerate-dependent phosphoglycerate mutase (233 aa).

Substrate is bound by residues 8-15 (RHGQSLWN), 21-22 (TG), Arg60, 116-119 (ERYY), Lys127, 143-144 (RR), and 187-188 (GN). The Tele-phosphohistidine intermediate role is filled by His9. Glu116 functions as the Proton donor/acceptor in the catalytic mechanism.

Belongs to the phosphoglycerate mutase family. BPG-dependent PGAM subfamily.

The enzyme catalyses (2R)-2-phosphoglycerate = (2R)-3-phosphoglycerate. It functions in the pathway carbohydrate degradation; glycolysis; pyruvate from D-glyceraldehyde 3-phosphate: step 3/5. In terms of biological role, catalyzes the interconversion of 2-phosphoglycerate and 3-phosphoglycerate. The chain is 2,3-bisphosphoglycerate-dependent phosphoglycerate mutase from Gloeothece citriformis (strain PCC 7424) (Cyanothece sp. (strain PCC 7424)).